Reading from the N-terminus, the 624-residue chain is Phosphoenolpyruvate carboxykinase [GTP] (624 aa).

Substrate-binding positions include arginine 88 and 222–224 (YGG). Mn(2+)-binding residues include lysine 231 and histidine 250. Serine 272 is a substrate binding site. 273-278 (MCGKTS) contributes to the GTP binding site. Residue cysteine 274 is part of the active site. Aspartate 291 provides a ligand contact to Mn(2+). 386 to 388 (NAR) provides a ligand contact to substrate. Residues arginine 388 and arginine 420 each contribute to the GTP site.

It belongs to the phosphoenolpyruvate carboxykinase [GTP] family. Mn(2+) is required as a cofactor.

The protein localises to the cytoplasm. The catalysed reaction is oxaloacetate + GTP = phosphoenolpyruvate + GDP + CO2. It functions in the pathway carbohydrate biosynthesis; gluconeogenesis. Functionally, catalyzes the conversion of oxaloacetate (OAA) to phosphoenolpyruvate (PEP), the rate-limiting step in the metabolic pathway that produces glucose from lactate and other precursors derived from the citric acid cycle. The chain is Phosphoenolpyruvate carboxykinase [GTP] from Pyrococcus furiosus (strain ATCC 43587 / DSM 3638 / JCM 8422 / Vc1).